Here is an 874-residue protein sequence, read N- to C-terminus: MSTPVFTVADIRKTFLDFFAAKGHTVVPSSSLVPGNDPTLMFTNSGMVQFKDVFLGVDKRPYVRATSVQACLRAGGKHNDLENVGYTARHHTFFEMLGNWSFGDYFKRESLKWAWELLTEVYKLPAERLLATVYEEDDEAYDIWTKEIGLPPERVIRIGDNKGGRYKSDNFWMMADTGPCGPCSEIFYDHGDHIPGGPPGSPDEDGDRFIEIWNNVFMQFNMAEDGSVTPLPAPCVDTGMGLERLAAILQHVHSNYEIDIFDALIKAASRETGEADLGHKSLRVIADHIRATAFLVSDGVNPSNEGRGYVQRRIIRRAIRHGYLLGKKTPFFHKLVADLAGLMGDAYPRLAADAQRITEVLKAEEERFFETLETGMQILDAALADGVKVLPGEVAFKLHDTYGFPLDLSADVCRERGLSVDEAGFTVAMNQQKAQARAAGKFKMDRALDYSGTGNVFTGYEHLEETSKIIAIYADGVSAAALKAGQNGVIVLDTTPFYAESGGQAGDEGELISGSARFAVSDTLKIKADVYGHHGTLAEGTLNVGDHVSARVNKEVRAATVRNHSATHLMHKALREVLGAHVQQKGSLVNAERTRFDFAHNAPMTDAQIREVEARVNAEILANSATDASEMDMEAAQKTGAMMLFGEKYGDSVRVLSIGSSKELCGGTHVGRTGDIGLFKIVAESGVASGVRRVEAVTGQNALAYLQSLESTVQSAAGTLKASPSELQNRIGQVLDQVKALEKEVAALKGKLASSQGDELMLQAVDVKGLKVLAARLEGADAKTLRETMDKLKDKLKTAVIVLAAVDGSKVQIAAGVTSDSTGKVKAGELVNFVAGQVGGKGGGKADMAMAGGTDASNLNAALDSVLGWVSAKL.

The Zn(2+) site is built by His-564, His-568, Cys-665, and His-669.

This sequence belongs to the class-II aminoacyl-tRNA synthetase family. The cofactor is Zn(2+).

Its subcellular location is the cytoplasm. The catalysed reaction is tRNA(Ala) + L-alanine + ATP = L-alanyl-tRNA(Ala) + AMP + diphosphate. Its function is as follows. Catalyzes the attachment of alanine to tRNA(Ala) in a two-step reaction: alanine is first activated by ATP to form Ala-AMP and then transferred to the acceptor end of tRNA(Ala). Also edits incorrectly charged Ser-tRNA(Ala) and Gly-tRNA(Ala) via its editing domain. The polypeptide is Alanine--tRNA ligase (Polaromonas naphthalenivorans (strain CJ2)).